We begin with the raw amino-acid sequence, 600 residues long: Oligopeptide-binding protein OppA (600 aa).

The signal sequence occupies residues 1-22 (MNKLKVTLLASSVVLAATLLSA). A lipid anchor (N-palmitoyl cysteine) is attached at C23. The S-diacylglycerol cysteine moiety is linked to residue C23.

It belongs to the bacterial solute-binding protein 5 family. The complex is composed of two ATP-binding proteins (OppD and OppF), two transmembrane proteins (OppB and OppC) and a solute-binding protein (OppA).

Its subcellular location is the cell membrane. In terms of biological role, part of the ABC transporter complex OppABCDF involved in the uptake of oligopeptides. Essential for uptake of peptides larger than three amino acids and for growth in milk. This is Oligopeptide-binding protein OppA from Lactococcus lactis subsp. lactis (Streptococcus lactis).